Here is a 205-residue protein sequence, read N- to C-terminus: Dephospho-CoA kinase (205 aa).

A DPCK domain is found at 4–203; that stretch reads KIGITGGIGS…QKIHYLCSAK (200 aa). Position 12 to 17 (12 to 17) interacts with ATP; that stretch reads GSGKSV.

The protein belongs to the CoaE family.

It is found in the cytoplasm. The enzyme catalyses 3'-dephospho-CoA + ATP = ADP + CoA + H(+). The protein operates within cofactor biosynthesis; coenzyme A biosynthesis; CoA from (R)-pantothenate: step 5/5. In terms of biological role, catalyzes the phosphorylation of the 3'-hydroxyl group of dephosphocoenzyme A to form coenzyme A. The sequence is that of Dephospho-CoA kinase from Bacteroides fragilis (strain YCH46).